Reading from the N-terminus, the 416-residue chain is Tyrosine--tRNA ligase (416 aa).

Tyr-34 provides a ligand contact to L-tyrosine. The short motif at 39 to 48 (PTGDSLHIGH) is the 'HIGH' region element. Positions 165 and 169 each coordinate L-tyrosine. The short motif at 227–231 (KFGKT) is the 'KMSKS' region element. ATP is bound at residue Lys-230. Residues 349-416 (KNIVEWLVDT…KKKYFLARVK (68 aa)) enclose the S4 RNA-binding domain.

The protein belongs to the class-I aminoacyl-tRNA synthetase family. TyrS type 1 subfamily. Homodimer.

It localises to the cytoplasm. It carries out the reaction tRNA(Tyr) + L-tyrosine + ATP = L-tyrosyl-tRNA(Tyr) + AMP + diphosphate + H(+). Its function is as follows. Catalyzes the attachment of tyrosine to tRNA(Tyr) in a two-step reaction: tyrosine is first activated by ATP to form Tyr-AMP and then transferred to the acceptor end of tRNA(Tyr). The sequence is that of Tyrosine--tRNA ligase from Ligilactobacillus salivarius (strain UCC118) (Lactobacillus salivarius).